The following is a 138-amino-acid chain: Large ribosomal subunit protein mL54 (138 aa).

The transit peptide at Met1–Trp16 directs the protein to the mitochondrion.

Belongs to the mitochondrion-specific ribosomal protein mL54 family. As to quaternary structure, component of the mitochondrial ribosome large subunit (39S) which comprises a 16S rRNA and about 50 distinct proteins.

Its subcellular location is the mitochondrion. The protein is Large ribosomal subunit protein mL54 (MRPL54) of Bos taurus (Bovine).